Reading from the N-terminus, the 187-residue chain is MTEYKLVIVGGGGVGKSALTIQLIQNHFIDEYDPTIEDSYRKQVSIDDETCLLDILDTAGQEEYSAMRDQYMRTGQGFLCVYSITSRSSYDEIASFREQILRVKDKDRVPLILVGNKADLDHERQVSVNEGQELAKGFNCPFMESSAKSRINVEEAFYSLVREIRKELKGDQSSGKAQKKKKQCLIL.

10–17 (GGGGVGKS) is a binding site for GTP. The Effector region motif lies at 32–40 (YDPTIEDSY). GTP contacts are provided by residues 57–61 (DTAGQ) and 116–119 (NKAD). The residue at position 184 (Cys184) is a Cysteine methyl ester. A lipid anchor (S-geranylgeranyl cysteine) is attached at Cys184. A propeptide spans 185 to 187 (LIL) (removed in mature form).

This sequence belongs to the small GTPase superfamily. Ras family.

The protein resides in the cell membrane. The catalysed reaction is GTP + H2O = GDP + phosphate + H(+). With respect to regulation, alternates between an inactive form bound to GDP and an active form bound to GTP. Activated by a guanine nucleotide-exchange factor (GEF) and inactivated by a GTPase-activating protein (GAP). In terms of biological role, ras proteins bind GDP/GTP and possess intrinsic GTPase activity. The chain is Ras-like protein rasD (rasD) from Dictyostelium discoideum (Social amoeba).